A 368-amino-acid chain; its full sequence is Protein L-Myc (368 aa).

3 disordered regions span residues 39-79, 112-179, and 218-295; these read PPTS…RGHS, RLAP…EKRR, and FPPE…FLER. Positions 135–147 are enriched in polar residues; it reads LEASNPAPATQCQ. Positions 247–258 are enriched in acidic residues; sequence EEEEEEEEEEEI. The span at 283 to 294 shows a compositional bias: basic and acidic residues; sequence DVTKRKNHNFLE. Residues 285–337 enclose the bHLH domain; it reads TKRKNHNFLERKRRNDLRSRFLALRDQVPTLASCSKAPKVVILSKALEYLQAL. The segment at 337–365 is leucine-zipper; that stretch reads LVGAEKKMATEKRQLRCRQQQLQKRIAYL.

As to quaternary structure, efficient DNA binding requires dimerization with another bHLH protein. Binds DNA as a heterodimer with MAX.

The protein localises to the nucleus. This Mus musculus (Mouse) protein is Protein L-Myc (Mycl).